The following is a 685-amino-acid chain: Stromal interaction molecule 1 (685 aa).

The first 22 residues, 1–22 (MDVCARLALWLLWGLLLHQGQS), serve as a signal peptide directing secretion. The Extracellular portion of the chain corresponds to 23-213 (LSHSHSEKNT…LLTRHNHLKD (191 aa)). The segment at 24 to 43 (SHSHSEKNTGASSGATSEES) is disordered. Residues 32 to 41 (TGASSGATSE) are compositionally biased toward low complexity. EF-hand domains lie at 64–97 (SFEA…EDLN) and 102–126 (TVKH…AWKA). Asp76, Asp78, Asn80, Asp82, and Glu87 together coordinate Ca(2+). N-linked (GlcNAc...) asparagine glycans are attached at residues Asn131 and Asn171. The SAM domain occupies 132-200 (WTVDEVIQWL…QLKALDTVLF (69 aa)). The chain crosses the membrane as a helical span at residues 214-234 (FMLVVSIVIGVGGCWFAYIQN). The Cytoplasmic segment spans residues 235–685 (RYSKEHMKKM…LKIFKKPLKK (451 aa)). A coiled-coil region spans residues 248 to 442 (LEGLHRAEQS…IEILCGFQIV (195 aa)). Residue Ser257 is modified to Phosphoserine. The tract at residues 344 to 442 (PEALQKWLQL…IEILCGFQIV (99 aa)) is SOAR/CAD. The interval 475–483 (DDVDDMDEE) is contributes to fast Ca(2+)-dependent inactivation of CRAC channels. Low complexity predominate over residues 490-499 (MQSPSLQSSV). The interval 490 to 542 (MQSPSLQSSVRQRLTEPQHGLGSQRDLTHSDSESSLHTSDRQRVAPKPPQMGR) is disordered. The residue at position 504 (Thr504) is a Phosphothreonine. Ser512 bears the Phosphoserine mark. Residues 515–532 (DLTHSDSESSLHTSDRQR) are compositionally biased toward basic and acidic residues. Thr517 carries the post-translational modification Phosphothreonine. 11 positions are modified to phosphoserine: Ser519, Ser521, Ser523, Ser524, Ser567, Ser575, Ser602, Ser608, Ser618, Ser621, and Ser628. The disordered stretch occupies residues 596–685 (LMELNPSVPP…LKIFKKPLKK (90 aa)). A compositionally biased stretch (low complexity) spans 608–620 (SPLLDSSHSHSPS). The Microtubule tip localization signal signature appears at 642–645 (TRIP). Over residues 655-666 (EEDNGSIGEETD) the composition is skewed to acidic residues. The residue at position 660 (Ser660) is a Phosphoserine. Thr665 carries the phosphothreonine modification. Position 668 is a phosphoserine (Ser668). Basic residues predominate over residues 670-685 (GRKKFPLKIFKKPLKK). The interval 672–685 (KKFPLKIFKKPLKK) is required for generation of inwardly rectifying CRAC currents.

In terms of assembly, monomer in the presence of Ca(2+). It oligomerizes in absence of Ca(2+). Forms homooligomers and heterooligomers with STIM2. Interacts with pore-forming subunits of CRAC channels, ORAI1, ORAI2 and ORAI3; this interaction is potentiated upon Ca(2+) store depletion. Interacts (via the transmembrane region and the SOAR/CAD domain) with SPPL3; the interaction promotes the binding of STIM1 to ORAI1. Interacts with ORAI1. Interacts with MAPRE1; probably required for targeting to the growing microtubule plus ends. Interacts with CRACR2A/EFCAB4B; the interaction is direct and takes place in absence of Ca(2+). Forms a complex with CRACR2A/EFCAB4B and ORAI1 at low concentration of Ca(2+), the complex dissociates at elevated Ca(2+) concentrations. Interacts with SARAF, promoting a slow inactivation of STIM1-dependent SOCE activity, possibly by facilitating the deoligomerization of STIM1. Interacts with EFHB; the interaction takes place upon Ca(2+)-store depletion and inhibits the association with SARAF. Interacts with ASPH. Interacts with SLC35G1; intracellular Ca(2+)-dependent. May interact with ATP1A1, ATP2A2, ATP2B1, ATP2B4, KPNB1 and XPO1; through SLC35G1. Interacts with TMEM203. Interacts with STIMATE, promoting STIM1 conformational switch. Interacts with TMEM178A. Interacts with CASQ1 (via C-terminal end and preferentially with the monomeric form); this interaction increases in response to a depletion of intracellular Ca(2+), decreases both STIM1 aggregation and clustering, interaction of STIM1 with ORAI1 and store-operated Ca(2+) entry (SOCE) activity. Interacts with ADCY8. In terms of processing, glycosylation is required for cell surface expression. Post-translationally, phosphorylated predominantly on Ser residues.

It localises to the cell membrane. The protein localises to the endoplasmic reticulum membrane. The protein resides in the sarcoplasmic reticulum. It is found in the cytoplasm. Its subcellular location is the cytoskeleton. Functionally, acts as a Ca(2+) sensor that gates two major inward rectifying Ca(2+) channels at the plasma membrane: Ca(2+) release-activated Ca(2+) (CRAC) channels and arachidonate-regulated Ca(2+)-selective (ARC) channels. Plays a role in mediating store-operated Ca(2+) entry (SOCE), a Ca(2+) influx following depletion of intracellular Ca(2+) stores. Upon Ca(2+) depletion, translocates from the endoplasmic reticulum to the plasma membrane where it activates CRAC channel pore-forming subunits ORA1, ORA2 and ORAI3 to generate sustained and oscillatory Ca(2+) entry. Involved in enamel formation. This chain is Stromal interaction molecule 1, found in Rattus norvegicus (Rat).